The primary structure comprises 105 residues: Small ribosomal subunit protein uS10 (105 aa).

Belongs to the universal ribosomal protein uS10 family. Part of the 30S ribosomal subunit.

Functionally, involved in the binding of tRNA to the ribosomes. The sequence is that of Small ribosomal subunit protein uS10 from Bdellovibrio bacteriovorus (strain ATCC 15356 / DSM 50701 / NCIMB 9529 / HD100).